The following is a 271-amino-acid chain: Aquaporin-2 (271 aa).

At 1–11 (MWELRSIAFSR) the chain is on the cytoplasmic side. Residues 12–32 (AVFAEFLATLLFVFFGLGSAL) traverse the membrane as a helical segment. Topologically, residues 33–40 (NWPQALPS) are extracellular. A helical membrane pass occupies residues 41–59 (VLQIAMAFGLGIGTLVQAL). Topologically, residues 60–64 (GHISG) are cytoplasmic. Residues 65–74 (AHINPAVTVA) constitute an intramembrane region (discontinuously helical). The short motif at 68–70 (NPA) is the NPA 1 element. The Cytoplasmic portion of the chain corresponds to 75 to 85 (CLVGCHVSVLR). The chain crosses the membrane as a helical span at residues 86 to 107 (AAFYVAAQLLGAVAGAALLHEI). At 108–127 (TPADIRGDLAVNALSNSTTA) the chain is on the extracellular side. An N-linked (GlcNAc...) asparagine glycan is attached at Asn123. The chain crosses the membrane as a helical span at residues 128-148 (GQAVTVELFLTLQLVLCIFAS). The Cytoplasmic portion of the chain corresponds to 149–156 (TDERRGEN). A helical transmembrane segment spans residues 157 to 176 (PGTPALSIGFSVALGHLLGI). At 177-180 (HYTG) the chain is on the extracellular side. Positions 181 to 193 (CSMNPARSLAPAV) form an intramembrane region, discontinuously helical. Positions 184–186 (NPA) match the NPA 2 motif. Topologically, residues 194-201 (VTGKFDDH) are extracellular. Residues 202–222 (WVFWIGPLVGAILGSLLYNYV) form a helical membrane-spanning segment. Residues 223–271 (LFPPAKSLSERLAVLKGLEPDTDWEEREVRRRQSVELHSPQSLPRGTKA) lie on the Cytoplasmic side of the membrane. A disordered region spans residues 248–271 (EREVRRRQSVELHSPQSLPRGTKA). Ser256 is modified (phosphoserine; by PKA). Polar residues predominate over residues 261-271 (SPQSLPRGTKA).

Belongs to the MIP/aquaporin (TC 1.A.8) family. Homotetramer. Interacts with micropeptide MIAC; the interaction leads to a reduction of filamentous actin fibers and inhibition of the EREG/EGFR signaling pathway. In terms of processing, ser-256 phosphorylation is necessary and sufficient for expression at the apical membrane. Endocytosis is not phosphorylation-dependent. Post-translationally, N-glycosylated. In terms of tissue distribution, expressed in collecting tubules in kidney medulla (at protein level). Detected in kidney.

It is found in the apical cell membrane. The protein localises to the basolateral cell membrane. Its subcellular location is the cell membrane. It localises to the cytoplasmic vesicle membrane. The protein resides in the golgi apparatus. It is found in the trans-Golgi network membrane. The enzyme catalyses H2O(in) = H2O(out). It catalyses the reaction glycerol(in) = glycerol(out). Functionally, forms a water-specific channel that provides the plasma membranes of renal collecting duct with high permeability to water, thereby permitting water to move in the direction of an osmotic gradient. Plays an essential role in renal water homeostasis. Could also be permeable to glycerol. In Homo sapiens (Human), this protein is Aquaporin-2.